Reading from the N-terminus, the 350-residue chain is 3-dehydroquinate synthase (350 aa).

Residues 106-110 (GVIGD), 130-131 (TS), K143, and K152 each bind NAD(+). 3 residues coordinate Zn(2+): E185, H246, and H263.

This sequence belongs to the sugar phosphate cyclases superfamily. Dehydroquinate synthase family. The cofactor is Co(2+). Zn(2+) is required as a cofactor. It depends on NAD(+) as a cofactor.

The protein resides in the cytoplasm. The enzyme catalyses 7-phospho-2-dehydro-3-deoxy-D-arabino-heptonate = 3-dehydroquinate + phosphate. It functions in the pathway metabolic intermediate biosynthesis; chorismate biosynthesis; chorismate from D-erythrose 4-phosphate and phosphoenolpyruvate: step 2/7. Functionally, catalyzes the conversion of 3-deoxy-D-arabino-heptulosonate 7-phosphate (DAHP) to dehydroquinate (DHQ). The sequence is that of 3-dehydroquinate synthase from Clostridium botulinum (strain Alaska E43 / Type E3).